A 513-amino-acid chain; its full sequence is Xylose import ATP-binding protein XylG (513 aa).

ABC transporter domains follow at residues 5 to 242 (LEMK…VGRE) and 259 to 505 (LRIE…LRSE). Residue 37-44 (GENGSGKS) coordinates ATP.

This sequence belongs to the ABC transporter superfamily. Xylose importer (TC 3.A.1.2.4) family. The complex is composed of two ATP-binding proteins (XylG), two transmembrane proteins (XylH) and a solute-binding protein (XylF).

The protein localises to the cell inner membrane. The catalysed reaction is D-xylose(out) + ATP + H2O = D-xylose(in) + ADP + phosphate + H(+). Part of the ABC transporter complex XylFGH involved in xylose import. Responsible for energy coupling to the transport system. The polypeptide is Xylose import ATP-binding protein XylG (Escherichia coli (strain UTI89 / UPEC)).